We begin with the raw amino-acid sequence, 154 residues long: Protein X (154 aa).

Residues 68–117 form a mitochondrial targeting sequence region; sequence PCALRFTSARRMETTVNAHWNLPKVLHKRTLGLSAMSTTDLEAYFKDCVF.

Belongs to the orthohepadnavirus protein X family. May form homodimer. May interact with host CEBPA, CFLAR, CREB1, DDB1, E4F1, HBXIP, HSPD1/HSP60, NFKBIA, POLR2E and SMAD4. Interacts with host SMC5-SMC6 complex and induces its degradation. Interacts with host TRPC4AP; leading to prevent ubiquitination of TRPC4AP. Interacts with host PLSCR1; this interaction promotes ubiquitination and degradation of HBx and impairs HBx-mediated cell proliferation. Post-translationally, a fraction may be phosphorylated in insect cells and HepG2 cells, a human hepatoblastoma cell line. Phosphorylated in vitro by host protein kinase C or mitogen-activated protein kinase. N-acetylated in insect cells.

It localises to the host cytoplasm. The protein resides in the host nucleus. It is found in the host mitochondrion. Its function is as follows. Multifunctional protein that plays a role in silencing host antiviral defenses and promoting viral transcription. Does not seem to be essential for HBV infection. May be directly involved in development of cirrhosis and liver cancer (hepatocellular carcinoma). Most of cytosolic activities involve modulation of cytosolic calcium. The effect on apoptosis is controversial depending on the cell types in which the studies have been conducted. May induce apoptosis by localizing in mitochondria and causing loss of mitochondrial membrane potential. May also modulate apoptosis by binding host CFLAR, a key regulator of the death-inducing signaling complex (DISC). Promotes viral transcription by using the host E3 ubiquitin ligase DDB1 to target the SMC5-SMC6 complex to proteasomal degradation. This host complex would otherwise bind to viral episomal DNA, and prevents its transcription. Moderately stimulates transcription of many different viral and cellular transcription elements. Promoters and enhancers stimulated by HBx contain DNA binding sites for NF-kappa-B, AP-1, AP-2, c-EBP, ATF/CREB, or the calcium-activated factor NF-AT. In Hepatitis B virus genotype B2 (isolate Vietnam/9873/1997) (HBV-B), this protein is Protein X.